Reading from the N-terminus, the 993-residue chain is Isoleucine--tRNA ligase (993 aa).

A 'HIGH' region motif is present at residues 64 to 74 (PYANGNIHIGH). L-isoleucyl-5'-AMP is bound at residue Glu621. The short motif at 662–666 (KMSKS) is the 'KMSKS' region element. Lys665 serves as a coordination point for ATP.

Belongs to the class-I aminoacyl-tRNA synthetase family. IleS type 1 subfamily. As to quaternary structure, monomer.

The protein resides in the cytoplasm. It catalyses the reaction tRNA(Ile) + L-isoleucine + ATP = L-isoleucyl-tRNA(Ile) + AMP + diphosphate. Functionally, catalyzes the attachment of isoleucine to tRNA(Ile). As IleRS can inadvertently accommodate and process structurally similar amino acids such as valine, to avoid such errors it has two additional distinct tRNA(Ile)-dependent editing activities. One activity is designated as 'pretransfer' editing and involves the hydrolysis of activated Val-AMP. The other activity is designated 'posttransfer' editing and involves deacylation of mischarged Val-tRNA(Ile). This Mesorhizobium japonicum (strain LMG 29417 / CECT 9101 / MAFF 303099) (Mesorhizobium loti (strain MAFF 303099)) protein is Isoleucine--tRNA ligase.